Here is a 618-residue protein sequence, read N- to C-terminus: MADSSPQLAKLRSLMKERKVHVYVIPSEDSHSSEYIAACDARREFMSGFTGSAGCAIVTLEAAALATDGRYFNQAAKQLDGNWTLLKQGLQDVPTWQEWAASQSAGGKTVAVDPSLLPGSAAKKLNDQVRKAGGADLVPLDENIVDIAWGDSRPERPCQSVSVLPDELAGKPVTTKIEELRQELAKKNCPGFFVSMLDEVAWLFNLRGNDIPYNPVFFSYATITPETAILYVDESKLDESCRAHLRENNVQVKPYDSFFPDARQLHTEVKAKRQAGGDGVVVGNFLISNKASWAMSRALGGDGSVEEMRSPVGDAKAVKNETEMNGMRACHVRDGAALIEFFAWLEDQLADKKIMIDEVQAADKLEELRSKHQHFVGLSFPTISSTGANAAIIHYGPEKGSCATIDPGRVYLCDSGAQYRDGTTDTTRTLHFGKPSDAEKKAYTLVLKGLIGLDTAVFPKGTTGFALDCLARQHLWKNGLDYRHGTGHGVGSYLNVHEGPIGIGTRVQYTEVPLAPGNVLSNEPGYYEDGNFGIRIENIMMVREVQTEHCFGDKSYLGFEHVTMVPYCQSLIERDMLTADEKAWLNAYNDEVLKNTKGFFQGDDLTMAWLTRETRPIE.

Mn(2+) is bound by residues Asp414, Asp425, Glu523, and Glu537.

The protein belongs to the peptidase M24B family. It depends on Mn(2+) as a cofactor.

It catalyses the reaction Release of any N-terminal amino acid, including proline, that is linked to proline, even from a dipeptide or tripeptide.. Its function is as follows. Catalyzes the removal of a penultimate prolyl residue from the N-termini of peptides. This Metarhizium robertsii (strain ARSEF 23 / ATCC MYA-3075) (Metarhizium anisopliae (strain ARSEF 23)) protein is Probable Xaa-Pro aminopeptidase P (AMPP).